Consider the following 207-residue polypeptide: Urease accessory protein UreG (207 aa).

16–23 (GPVGSGKT) provides a ligand contact to GTP.

It belongs to the SIMIBI class G3E GTPase family. UreG subfamily. Homodimer. UreD, UreF and UreG form a complex that acts as a GTP-hydrolysis-dependent molecular chaperone, activating the urease apoprotein by helping to assemble the nickel containing metallocenter of UreC. The UreE protein probably delivers the nickel.

It is found in the cytoplasm. Functionally, facilitates the functional incorporation of the urease nickel metallocenter. This process requires GTP hydrolysis, probably effectuated by UreG. The sequence is that of Urease accessory protein UreG from Cupriavidus metallidurans (strain ATCC 43123 / DSM 2839 / NBRC 102507 / CH34) (Ralstonia metallidurans).